The chain runs to 341 residues: Biotin synthase (341 aa).

In terms of domain architecture, Radical SAM core spans 40-267 (AEIQVSTLLS…RSMVRLSAGR (228 aa)). [4Fe-4S] cluster is bound by residues cysteine 55, cysteine 59, and cysteine 62. Cysteine 99, cysteine 130, cysteine 190, and arginine 262 together coordinate [2Fe-2S] cluster.

The protein belongs to the radical SAM superfamily. Biotin synthase family. Homodimer. It depends on [4Fe-4S] cluster as a cofactor. [2Fe-2S] cluster serves as cofactor.

It carries out the reaction (4R,5S)-dethiobiotin + (sulfur carrier)-SH + 2 reduced [2Fe-2S]-[ferredoxin] + 2 S-adenosyl-L-methionine = (sulfur carrier)-H + biotin + 2 5'-deoxyadenosine + 2 L-methionine + 2 oxidized [2Fe-2S]-[ferredoxin]. The protein operates within cofactor biosynthesis; biotin biosynthesis; biotin from 7,8-diaminononanoate: step 2/2. Catalyzes the conversion of dethiobiotin (DTB) to biotin by the insertion of a sulfur atom into dethiobiotin via a radical-based mechanism. The chain is Biotin synthase from Xylella fastidiosa (strain M23).